Here is an 871-residue protein sequence, read N- to C-terminus: Chaperone protein ClpB 1 (871 aa).

The 142-residue stretch at 6–147 (PNQFTEKAWA…REAIQQIRGS (142 aa)) folds into the Clp R domain. Repeat regions lie at residues 9-73 (FTEK…ISRQ) and 84-147 (LGQS…IRGS). The segment at 160-341 (AALEKYGRDL…RRFQQVYVDQ (182 aa)) is NBD1. Position 207-214 (207-214 (GEPGVGKT)) interacts with ATP. Residues 342–550 (PSVEDTISIL…IAEIISKWTG (209 aa)) form a linker region. A coiled-coil region spans residues 392–526 (IDLVDEAAAK…AEAKLREIQV (135 aa)). Positions 560–771 (EAQKLLHLEE…RVDEFIIFHS (212 aa)) are NBD2. Residue 610 to 617 (GPTGVGKT) coordinates ATP. The tract at residues 772-871 (LRKDQLRQIV…FRRQVELATV (100 aa)) is C-terminal.

The protein belongs to the ClpA/ClpB family. As to quaternary structure, homohexamer. The oligomerization is ATP-dependent.

Its subcellular location is the cytoplasm. In terms of biological role, part of a stress-induced multi-chaperone system, it is involved in the recovery of the cell from heat-induced damage, in cooperation with DnaK, DnaJ and GrpE. Acts before DnaK, in the processing of protein aggregates. Protein binding stimulates the ATPase activity; ATP hydrolysis unfolds the denatured protein aggregates, which probably helps expose new hydrophobic binding sites on the surface of ClpB-bound aggregates, contributing to the solubilization and refolding of denatured protein aggregates by DnaK. This chain is Chaperone protein ClpB 1 (clpB1), found in Thermosynechococcus vestitus (strain NIES-2133 / IAM M-273 / BP-1).